The following is a 162-amino-acid chain: uncharacterized protein (162 aa).

Positions 65 to 76 (EEKPLEVAQDRN) are enriched in basic and acidic residues. The segment at 65 to 93 (EEKPLEVAQDRNNKRKAPSHLEPAHDFIS) is disordered.

This is an uncharacterized protein from Bacillus subtilis (strain 168).